We begin with the raw amino-acid sequence, 515 residues long: Chromosomal replication initiator protein DnaA (515 aa).

The segment at 1–89 (MVADQAVLSS…LLAISIDANL (89 aa)) is domain I, interacts with DnaA modulators. The domain II stretch occupies residues 89 to 172 (LQPPRTPSSE…APPSTSAETS (84 aa)). Disordered stretches follow at residues 90-130 (QPPR…SRRA) and 142-171 (PPAD…SAET). Composition is skewed to low complexity over residues 102–114 (SSLA…AAAP) and 143–160 (PADV…NGKP). Positions 173-389 (RLNDRYHFET…GALIRVTAFA (217 aa)) are domain III, AAA+ region. ATP-binding residues include glycine 217, glycine 219, lysine 220, and threonine 221. The tract at residues 390–515 (SLNRQTVDIE…NEIKRKQRGA (126 aa)) is domain IV, binds dsDNA.

It belongs to the DnaA family. As to quaternary structure, oligomerizes as a right-handed, spiral filament on DNA at oriC.

It localises to the cytoplasm. Functionally, plays an essential role in the initiation and regulation of chromosomal replication. ATP-DnaA binds to the origin of replication (oriC) to initiate formation of the DNA replication initiation complex once per cell cycle. Binds the DnaA box (a 9 base pair repeat at the origin) and separates the double-stranded (ds)DNA. Forms a right-handed helical filament on oriC DNA; dsDNA binds to the exterior of the filament while single-stranded (ss)DNA is stabiized in the filament's interior. The ATP-DnaA-oriC complex binds and stabilizes one strand of the AT-rich DNA unwinding element (DUE), permitting loading of DNA polymerase. After initiation quickly degrades to an ADP-DnaA complex that is not apt for DNA replication. Binds acidic phospholipids. This Micrococcus luteus (strain ATCC 4698 / DSM 20030 / JCM 1464 / CCM 169 / CCUG 5858 / IAM 1056 / NBRC 3333 / NCIMB 9278 / NCTC 2665 / VKM Ac-2230) (Micrococcus lysodeikticus) protein is Chromosomal replication initiator protein DnaA.